A 255-amino-acid polypeptide reads, in one-letter code: tRNA (guanine-N(1)-)-methyltransferase (255 aa).

Residues Gly-117 and 137–142 (IGDYVL) contribute to the S-adenosyl-L-methionine site.

It belongs to the RNA methyltransferase TrmD family. Homodimer.

Its subcellular location is the cytoplasm. The enzyme catalyses guanosine(37) in tRNA + S-adenosyl-L-methionine = N(1)-methylguanosine(37) in tRNA + S-adenosyl-L-homocysteine + H(+). Its function is as follows. Specifically methylates guanosine-37 in various tRNAs. This is tRNA (guanine-N(1)-)-methyltransferase from Glaesserella parasuis serovar 5 (strain SH0165) (Haemophilus parasuis).